The chain runs to 155 residues: Ribosomal RNA large subunit methyltransferase H (155 aa).

S-adenosyl-L-methionine is bound by residues Leu-73, Gly-104, and 123–128; that span reads ISKMTF.

Belongs to the RNA methyltransferase RlmH family. In terms of assembly, homodimer.

It localises to the cytoplasm. The catalysed reaction is pseudouridine(1915) in 23S rRNA + S-adenosyl-L-methionine = N(3)-methylpseudouridine(1915) in 23S rRNA + S-adenosyl-L-homocysteine + H(+). Specifically methylates the pseudouridine at position 1915 (m3Psi1915) in 23S rRNA. This Francisella philomiragia subsp. philomiragia (strain ATCC 25017 / CCUG 19701 / FSC 153 / O#319-036) protein is Ribosomal RNA large subunit methyltransferase H.